A 689-amino-acid chain; its full sequence is Glycine--tRNA ligase beta subunit (689 aa).

It belongs to the class-II aminoacyl-tRNA synthetase family. As to quaternary structure, tetramer of two alpha and two beta subunits.

It localises to the cytoplasm. It catalyses the reaction tRNA(Gly) + glycine + ATP = glycyl-tRNA(Gly) + AMP + diphosphate. The sequence is that of Glycine--tRNA ligase beta subunit from Acinetobacter baumannii (strain AB307-0294).